Here is a 493-residue protein sequence, read N- to C-terminus: Ubiquitin carboxyl-terminal hydrolase 14 (493 aa).

The region spanning 4 to 80 (YSVTVKWGKE…MMGSADALPE (77 aa)) is the Ubiquitin-like domain. Residue threonine 52 is modified to Phosphothreonine. The 378-residue stretch at 105 to 482 (CGLTNLGNTC…IAYVLLYGPR (378 aa)) folds into the USP domain. Cysteine 114 (nucleophile) is an active-site residue. A phosphoserine mark is found at serine 143, serine 148, serine 236, serine 301, and serine 431. Histidine 434 acts as the Proton acceptor in catalysis. Lysine 448 carries the post-translational modification N6-acetyllysine.

Belongs to the peptidase C19 family. USP14/UBP6 subfamily. In terms of assembly, homodimer (Potential). Associates with the 26S proteasome. Interacts with FANCC, CXCR4 and ERN1. Interacts with TRIM14; this interaction recruits USP14 to cleave ubiquitin chains of CGAS.

It localises to the cytoplasm. Its subcellular location is the cell membrane. The catalysed reaction is Thiol-dependent hydrolysis of ester, thioester, amide, peptide and isopeptide bonds formed by the C-terminal Gly of ubiquitin (a 76-residue protein attached to proteins as an intracellular targeting signal).. Its function is as follows. Proteasome-associated deubiquitinase which releases ubiquitin from the proteasome targeted ubiquitinated proteins. Ensures the regeneration of ubiquitin at the proteasome. Is a reversibly associated subunit of the proteasome and a large fraction of proteasome-free protein exists within the cell. Required for the degradation of the chemokine receptor CXCR4 which is critical for CXCL12-induced cell chemotaxis. Also serves as a physiological inhibitor of endoplasmic reticulum-associated degradation (ERAD) under the non-stressed condition by inhibiting the degradation of unfolded endoplasmic reticulum proteins via interaction with ERN1. Indispensable for synaptic development and function at neuromuscular junctions (NMJs). Plays a role in the innate immune defense against viruses by stabilizing the viral DNA sensor CGAS and thus inhibiting its autophagic degradation. The polypeptide is Ubiquitin carboxyl-terminal hydrolase 14 (USP14) (Oryctolagus cuniculus (Rabbit)).